We begin with the raw amino-acid sequence, 347 residues long: Coproporphyrinogen-III oxidase, aerobic 2 (347 aa).

Residues methionine 1–arginine 31 are disordered. The segment covering asparagine 7 to arginine 31 has biased composition (polar residues). The segment at valine 75–glutamine 84 is important for dimerization. Serine 119 provides a ligand contact to substrate. Catalysis depends on histidine 133, which acts as the Proton donor. Residues asparagine 135–arginine 137 and lysine 305–serine 310 each bind substrate. The segment at tyrosine 287–glutamate 322 is important for dimerization.

This sequence belongs to the aerobic coproporphyrinogen-III oxidase family. As to quaternary structure, homodimer.

Its subcellular location is the cytoplasm. It carries out the reaction coproporphyrinogen III + O2 + 2 H(+) = protoporphyrinogen IX + 2 CO2 + 2 H2O. Its pathway is porphyrin-containing compound metabolism; protoporphyrin-IX biosynthesis; protoporphyrinogen-IX from coproporphyrinogen-III (O2 route): step 1/1. In terms of biological role, key enzyme in heme biosynthesis. Catalyzes the oxidative decarboxylation of propionic acid side chains of rings A and B of coproporphyrinogen III. The chain is Coproporphyrinogen-III oxidase, aerobic 2 from Nostoc sp. (strain PCC 7120 / SAG 25.82 / UTEX 2576).